The primary structure comprises 275 residues: Gene 18 protein (275 aa).

The protein belongs to the herpesviridae UL79 family.

The protein is Gene 18 protein (18) of Connochaetes taurinus (Blue wildebeest).